The following is a 142-amino-acid chain: Large ribosomal subunit protein uL13 (142 aa).

This sequence belongs to the universal ribosomal protein uL13 family. As to quaternary structure, part of the 50S ribosomal subunit.

In terms of biological role, this protein is one of the early assembly proteins of the 50S ribosomal subunit, although it is not seen to bind rRNA by itself. It is important during the early stages of 50S assembly. The sequence is that of Large ribosomal subunit protein uL13 from Pseudomonas putida (strain W619).